Consider the following 203-residue polypeptide: Holliday junction branch migration complex subunit RuvA (203 aa).

The tract at residues 1–64 (MIGRLRGIIL…EDAQLLYGFN (64 aa)) is domain I. Residues 65–142 (NKQERTLFKE…KGLHGDLFTP (78 aa)) form a domain II region. The flexible linker stretch occupies residues 143–154 (AVDLVLTSPASP). The tract at residues 155–203 (GSEDAEQEAVAALVALGYKPQEASRMVSKIARPDASSETLIRDALRAAL) is domain III.

The protein belongs to the RuvA family. As to quaternary structure, homotetramer. Forms an RuvA(8)-RuvB(12)-Holliday junction (HJ) complex. HJ DNA is sandwiched between 2 RuvA tetramers; dsDNA enters through RuvA and exits via RuvB. An RuvB hexamer assembles on each DNA strand where it exits the tetramer. Each RuvB hexamer is contacted by two RuvA subunits (via domain III) on 2 adjacent RuvB subunits; this complex drives branch migration. In the full resolvosome a probable DNA-RuvA(4)-RuvB(12)-RuvC(2) complex forms which resolves the HJ.

Its subcellular location is the cytoplasm. Its function is as follows. The RuvA-RuvB-RuvC complex processes Holliday junction (HJ) DNA during genetic recombination and DNA repair, while the RuvA-RuvB complex plays an important role in the rescue of blocked DNA replication forks via replication fork reversal (RFR). RuvA specifically binds to HJ cruciform DNA, conferring on it an open structure. The RuvB hexamer acts as an ATP-dependent pump, pulling dsDNA into and through the RuvAB complex. HJ branch migration allows RuvC to scan DNA until it finds its consensus sequence, where it cleaves and resolves the cruciform DNA. The protein is Holliday junction branch migration complex subunit RuvA of Salmonella schwarzengrund (strain CVM19633).